The chain runs to 149 residues: Nucleoside diphosphate kinase (149 aa).

ATP-binding residues include Lys-9, Phe-57, Arg-85, Thr-91, Arg-102, and Asn-112. The active-site Pros-phosphohistidine intermediate is the His-115.

Belongs to the NDK family. In terms of assembly, homotetramer. Mg(2+) serves as cofactor.

Its subcellular location is the cytoplasm. The enzyme catalyses a 2'-deoxyribonucleoside 5'-diphosphate + ATP = a 2'-deoxyribonucleoside 5'-triphosphate + ADP. The catalysed reaction is a ribonucleoside 5'-diphosphate + ATP = a ribonucleoside 5'-triphosphate + ADP. Functionally, major role in the synthesis of nucleoside triphosphates other than ATP. The ATP gamma phosphate is transferred to the NDP beta phosphate via a ping-pong mechanism, using a phosphorylated active-site intermediate. In Desulfitobacterium hafniense (strain DSM 10664 / DCB-2), this protein is Nucleoside diphosphate kinase.